The sequence spans 265 residues: MNHDDPNASGVPHDDANDAAPASASDAARATGHADDESSPLHLRRIRSFVTRAGRVSTGQRRAIDELGPRFVVPYDNAQPDWDTVFGRRAPRVLEIGFGMGASTAEIAAHRPGDDFIGVEVHEPGVGALLKLIGEQQLSNIRIIQHDAVEVLEHMIAPDSLDGAHIFFPDPWHKARHHKRRLIQPPFVAQLAARLKPGAYLHCATDWQNYAEQMLEVLGADPSLENTAQDYAPRPDYRPVTKFERRGLRLGHGVWDLVFRKKRAG.

Over residues methionine 1–alanine 16 the composition is skewed to basic and acidic residues. The disordered stretch occupies residues methionine 1–proline 40. Low complexity predominate over residues aspartate 18–threonine 31. Residues glutamate 95, glutamate 120, aspartate 147, and aspartate 170 each coordinate S-adenosyl-L-methionine. Aspartate 170 is an active-site residue. Residues lysine 174, aspartate 206, and threonine 241–glutamate 244 contribute to the substrate site.

This sequence belongs to the class I-like SAM-binding methyltransferase superfamily. TrmB family.

The enzyme catalyses guanosine(46) in tRNA + S-adenosyl-L-methionine = N(7)-methylguanosine(46) in tRNA + S-adenosyl-L-homocysteine. The protein operates within tRNA modification; N(7)-methylguanine-tRNA biosynthesis. Its function is as follows. Catalyzes the formation of N(7)-methylguanine at position 46 (m7G46) in tRNA. The sequence is that of tRNA (guanine-N(7)-)-methyltransferase from Burkholderia thailandensis (strain ATCC 700388 / DSM 13276 / CCUG 48851 / CIP 106301 / E264).